The following is a 72-amino-acid chain: Translation initiation factor IF-1 (72 aa).

The S1-like domain occupies 1 to 72 (MAKDDVIEVE…TRGRIVWRGK (72 aa)).

It belongs to the IF-1 family. Component of the 30S ribosomal translation pre-initiation complex which assembles on the 30S ribosome in the order IF-2 and IF-3, IF-1 and N-formylmethionyl-tRNA(fMet); mRNA recruitment can occur at any time during PIC assembly.

It is found in the cytoplasm. One of the essential components for the initiation of protein synthesis. Stabilizes the binding of IF-2 and IF-3 on the 30S subunit to which N-formylmethionyl-tRNA(fMet) subsequently binds. Helps modulate mRNA selection, yielding the 30S pre-initiation complex (PIC). Upon addition of the 50S ribosomal subunit IF-1, IF-2 and IF-3 are released leaving the mature 70S translation initiation complex. This is Translation initiation factor IF-1 from Caldanaerobacter subterraneus subsp. tengcongensis (strain DSM 15242 / JCM 11007 / NBRC 100824 / MB4) (Thermoanaerobacter tengcongensis).